A 598-amino-acid polypeptide reads, in one-letter code: Probable translation initiation factor IF-2 (598 aa).

Residues 3 to 225 (LRCPIVSVLG…GLAQKFLEQK (223 aa)) form the tr-type G domain. The segment at 12 to 19 (GHVDHGKT) is G1. Residue 12-19 (GHVDHGKT) coordinates GTP. Residues 37-41 (GITQH) form a G2 region. The segment at 76–79 (DTPG) is G3. GTP contacts are provided by residues 76–80 (DTPGH) and 130–133 (NKVD). A G4 region spans residues 130–133 (NKVD). Residues 200–202 (SAM) form a G5 region.

Belongs to the TRAFAC class translation factor GTPase superfamily. Classic translation factor GTPase family. IF-2 subfamily.

Function in general translation initiation by promoting the binding of the formylmethionine-tRNA to ribosomes. Seems to function along with eIF-2. The protein is Probable translation initiation factor IF-2 of Methanococcus maripaludis (strain C5 / ATCC BAA-1333).